A 347-amino-acid polypeptide reads, in one-letter code: GTPase Obg (347 aa).

An Obg domain is found at Met-1 to Ile-158. Residues Ala-159–Lys-339 form the OBG-type G domain. Residues Gly-165 to Ser-172, Phe-190 to Thr-194, Asp-212 to Gly-215, Ser-280 to Asp-283, and Ser-320 to Leu-322 each bind GTP. Mg(2+)-binding residues include Ser-172 and Thr-192.

Belongs to the TRAFAC class OBG-HflX-like GTPase superfamily. OBG GTPase family. In terms of assembly, monomer. Mg(2+) serves as cofactor.

Its subcellular location is the cytoplasm. An essential GTPase which binds GTP, GDP and possibly (p)ppGpp with moderate affinity, with high nucleotide exchange rates and a fairly low GTP hydrolysis rate. Plays a role in control of the cell cycle, stress response, ribosome biogenesis and in those bacteria that undergo differentiation, in morphogenesis control. The polypeptide is GTPase Obg (Campylobacter lari (strain RM2100 / D67 / ATCC BAA-1060)).